A 154-amino-acid chain; its full sequence is Deoxyuridine 5'-triphosphate nucleotidohydrolase (154 aa).

Substrate contacts are provided by residues 64–66 (RSG), N77, 81–83 (TID), and K91.

It belongs to the dUTPase family. As to quaternary structure, homotrimer. Mg(2+) is required as a cofactor.

It catalyses the reaction dUTP + H2O = dUMP + diphosphate + H(+). Its pathway is pyrimidine metabolism; dUMP biosynthesis; dUMP from dCTP (dUTP route): step 2/2. This enzyme is involved in nucleotide metabolism: it produces dUMP, the immediate precursor of thymidine nucleotides and it decreases the intracellular concentration of dUTP so that uracil cannot be incorporated into DNA. This is Deoxyuridine 5'-triphosphate nucleotidohydrolase from Mycobacterium avium (strain 104).